We begin with the raw amino-acid sequence, 149 residues long: D-aminoacyl-tRNA deacylase (149 aa).

Positions 137 to 138 (GP) match the Gly-cisPro motif, important for rejection of L-amino acids motif.

This sequence belongs to the DTD family. Homodimer.

Its subcellular location is the cytoplasm. The enzyme catalyses glycyl-tRNA(Ala) + H2O = tRNA(Ala) + glycine + H(+). The catalysed reaction is a D-aminoacyl-tRNA + H2O = a tRNA + a D-alpha-amino acid + H(+). In terms of biological role, an aminoacyl-tRNA editing enzyme that deacylates mischarged D-aminoacyl-tRNAs. Also deacylates mischarged glycyl-tRNA(Ala), protecting cells against glycine mischarging by AlaRS. Acts via tRNA-based rather than protein-based catalysis; rejects L-amino acids rather than detecting D-amino acids in the active site. By recycling D-aminoacyl-tRNA to D-amino acids and free tRNA molecules, this enzyme counteracts the toxicity associated with the formation of D-aminoacyl-tRNA entities in vivo and helps enforce protein L-homochirality. The sequence is that of D-aminoacyl-tRNA deacylase from Paracoccus denitrificans (strain Pd 1222).